Reading from the N-terminus, the 358-residue chain is UDP-N-acetylglucosamine--N-acetylmuramyl-(pentapeptide) pyrophosphoryl-undecaprenol N-acetylglucosamine transferase (358 aa).

Residues 13-15 (TGG), Asn125, Arg161, Ser189, Ile244, and Gln288 contribute to the UDP-N-acetyl-alpha-D-glucosamine site.

It belongs to the glycosyltransferase 28 family. MurG subfamily.

It localises to the cell membrane. The catalysed reaction is di-trans,octa-cis-undecaprenyl diphospho-N-acetyl-alpha-D-muramoyl-L-alanyl-D-glutamyl-meso-2,6-diaminopimeloyl-D-alanyl-D-alanine + UDP-N-acetyl-alpha-D-glucosamine = di-trans,octa-cis-undecaprenyl diphospho-[N-acetyl-alpha-D-glucosaminyl-(1-&gt;4)]-N-acetyl-alpha-D-muramoyl-L-alanyl-D-glutamyl-meso-2,6-diaminopimeloyl-D-alanyl-D-alanine + UDP + H(+). It functions in the pathway cell wall biogenesis; peptidoglycan biosynthesis. In terms of biological role, cell wall formation. Catalyzes the transfer of a GlcNAc subunit on undecaprenyl-pyrophosphoryl-MurNAc-pentapeptide (lipid intermediate I) to form undecaprenyl-pyrophosphoryl-MurNAc-(pentapeptide)GlcNAc (lipid intermediate II). The sequence is that of UDP-N-acetylglucosamine--N-acetylmuramyl-(pentapeptide) pyrophosphoryl-undecaprenol N-acetylglucosamine transferase from Baumannia cicadellinicola subsp. Homalodisca coagulata.